Reading from the N-terminus, the 425-residue chain is Glutamyl-tRNA reductase (425 aa).

Substrate-binding positions include 49-52 (TCNR), Ser109, 114-116 (EGQ), and Gln120. Cys50 serves as the catalytic Nucleophile. 189-194 (GAGETG) is an NADP(+) binding site.

Belongs to the glutamyl-tRNA reductase family. As to quaternary structure, homodimer.

The catalysed reaction is (S)-4-amino-5-oxopentanoate + tRNA(Glu) + NADP(+) = L-glutamyl-tRNA(Glu) + NADPH + H(+). The protein operates within porphyrin-containing compound metabolism; protoporphyrin-IX biosynthesis; 5-aminolevulinate from L-glutamyl-tRNA(Glu): step 1/2. Its pathway is porphyrin-containing compound metabolism; chlorophyll biosynthesis. In terms of biological role, catalyzes the NADPH-dependent reduction of glutamyl-tRNA(Glu) to glutamate 1-semialdehyde (GSA). This Chlorobium luteolum (strain DSM 273 / BCRC 81028 / 2530) (Pelodictyon luteolum) protein is Glutamyl-tRNA reductase.